Consider the following 134-residue polypeptide: Glycine cleavage system H protein (134 aa).

Residues threonine 24 to glutamine 106 enclose the Lipoyl-binding domain. Lysine 65 is modified (N6-lipoyllysine).

The protein belongs to the GcvH family. The glycine cleavage system is composed of four proteins: P, T, L and H. (R)-lipoate serves as cofactor.

The glycine cleavage system catalyzes the degradation of glycine. The H protein shuttles the methylamine group of glycine from the P protein to the T protein. The chain is Glycine cleavage system H protein from Mycobacterium bovis (strain ATCC BAA-935 / AF2122/97).